A 363-amino-acid chain; its full sequence is Dihydroorotate dehydrogenase (quinone) (363 aa).

Residues 62 to 66 (AGFDK) and Thr86 contribute to the FMN site. Lys66 provides a ligand contact to substrate. Residue 111–115 (NRMGF) participates in substrate binding. Residues Asn142 and Asn175 each coordinate FMN. Asn175 lines the substrate pocket. Ser178 functions as the Nucleophile in the catalytic mechanism. Asn180 lines the substrate pocket. FMN-binding residues include Lys216 and Thr244. Substrate is bound at residue 245-246 (NT). FMN is bound by residues Gly267, Gly296, and 317–318 (YT).

This sequence belongs to the dihydroorotate dehydrogenase family. Type 2 subfamily. In terms of assembly, monomer. FMN is required as a cofactor.

The protein resides in the cell membrane. The catalysed reaction is (S)-dihydroorotate + a quinone = orotate + a quinol. It participates in pyrimidine metabolism; UMP biosynthesis via de novo pathway; orotate from (S)-dihydroorotate (quinone route): step 1/1. Catalyzes the conversion of dihydroorotate to orotate with quinone as electron acceptor. The protein is Dihydroorotate dehydrogenase (quinone) of Anaeromyxobacter sp. (strain Fw109-5).